The following is a 389-amino-acid chain: Methane monooxygenase component A beta chain (389 aa).

As to quaternary structure, m.capsulatus has two forms of methane monooxygenase, a soluble and a membrane-bound type. The soluble type consists of four components (A to D): protein A, comprising three chains, in an alpha-2, beta-2, gamma-2 configuration, is a nonheme iron protein containing an unusual mu-hydroxo bridge structure at its active site and interacts with both oxygen and methane.

The enzyme catalyses methane + NADH + O2 + H(+) = methanol + NAD(+) + H2O. It catalyses the reaction methane + NADPH + O2 + H(+) = methanol + NADP(+) + H2O. Functionally, responsible for the initial oxygenation of methane to methanol in methanotrophs. It also catalyzes the monohydroxylation of a variety of unactivated alkenes, alicyclic, aromatic and heterocyclic compounds. The polypeptide is Methane monooxygenase component A beta chain (mmoY) (Methylococcus capsulatus (strain ATCC 33009 / NCIMB 11132 / Bath)).